The sequence spans 426 residues: Serine--tRNA ligase (426 aa).

233-235 (TAE) provides a ligand contact to L-serine. 264–266 (RSE) is a binding site for ATP. Glu287 contacts L-serine. 351–354 (EISS) serves as a coordination point for ATP. Position 387 (Ser387) interacts with L-serine.

The protein belongs to the class-II aminoacyl-tRNA synthetase family. Type-1 seryl-tRNA synthetase subfamily. As to quaternary structure, homodimer. The tRNA molecule binds across the dimer.

The protein localises to the cytoplasm. It carries out the reaction tRNA(Ser) + L-serine + ATP = L-seryl-tRNA(Ser) + AMP + diphosphate + H(+). The catalysed reaction is tRNA(Sec) + L-serine + ATP = L-seryl-tRNA(Sec) + AMP + diphosphate + H(+). The protein operates within aminoacyl-tRNA biosynthesis; selenocysteinyl-tRNA(Sec) biosynthesis; L-seryl-tRNA(Sec) from L-serine and tRNA(Sec): step 1/1. Functionally, catalyzes the attachment of serine to tRNA(Ser). Is also able to aminoacylate tRNA(Sec) with serine, to form the misacylated tRNA L-seryl-tRNA(Sec), which will be further converted into selenocysteinyl-tRNA(Sec). This is Serine--tRNA ligase from Pseudomonas putida (strain ATCC 700007 / DSM 6899 / JCM 31910 / BCRC 17059 / LMG 24140 / F1).